Reading from the N-terminus, the 467-residue chain is Probable Xaa-Pro aminopeptidase SMAC_04549 (467 aa).

Residues D263, D274, E397, and E437 each contribute to the Mn(2+) site.

It belongs to the peptidase M24B family. It depends on Mn(2+) as a cofactor.

The catalysed reaction is Release of any N-terminal amino acid, including proline, that is linked to proline, even from a dipeptide or tripeptide.. Catalyzes the removal of a penultimate prolyl residue from the N-termini of peptides. The chain is Probable Xaa-Pro aminopeptidase SMAC_04549 from Sordaria macrospora (strain ATCC MYA-333 / DSM 997 / K(L3346) / K-hell).